An 81-amino-acid polypeptide reads, in one-letter code: Sulfur carrier protein TusA (81 aa).

The Cysteine persulfide intermediate role is filled by Cys-19.

The protein belongs to the sulfur carrier protein TusA family. In terms of assembly, interacts with IscS.

Its subcellular location is the cytoplasm. Its pathway is tRNA modification. Its function is as follows. Sulfur carrier protein involved in sulfur trafficking in the cell. Part of a sulfur-relay system required for 2-thiolation during synthesis of 2-thiouridine of the modified wobble base 5-methylaminomethyl-2-thiouridine (mnm(5)s(2)U) in tRNA. Interacts with IscS and stimulates its cysteine desulfurase activity. Accepts an activated sulfur from IscS, which is then transferred to TusD, and thus determines the direction of sulfur flow from IscS to 2-thiouridine formation. Also appears to be involved in sulfur transfer for the biosynthesis of molybdopterin. The polypeptide is Sulfur carrier protein TusA (Enterobacter sp. (strain 638)).